An 88-amino-acid polypeptide reads, in one-letter code: UPF0250 protein swp_3927 (88 aa).

The protein belongs to the UPF0250 family.

The chain is UPF0250 protein swp_3927 from Shewanella piezotolerans (strain WP3 / JCM 13877).